We begin with the raw amino-acid sequence, 2392 residues long: Protein Ycf2 (2392 aa).

Residue 1658–1665 (GPTEIGKS) participates in ATP binding.

Belongs to the Ycf2 family.

Its subcellular location is the plastid. The protein localises to the chloroplast stroma. Functionally, probable ATPase of unknown function. Its presence in a non-photosynthetic plant (Epifagus virginiana) and experiments in tobacco indicate that it has an essential function which is probably not related to photosynthesis. This is Protein Ycf2 from Anthoceros angustus (Hornwort).